We begin with the raw amino-acid sequence, 453 residues long: Bifunctional protein GlmU (453 aa).

The segment at 1 to 225 (MNIVILAAGT…EWETLGVNSK (225 aa)) is pyrophosphorylase. UDP-N-acetyl-alpha-D-glucosamine is bound by residues 6-9 (LAAG), lysine 20, glutamine 71, 76-77 (GT), 98-100 (YGD), glycine 135, glutamate 150, asparagine 165, and asparagine 223. Position 100 (aspartate 100) interacts with Mg(2+). Asparagine 223 is a Mg(2+) binding site. The interval 226–246 (AQLAELERIHQRTIADALLVD) is linker. Residues 247–453 (GVTLADPARV…GYVRPVKKKS (207 aa)) form an N-acetyltransferase region. UDP-N-acetyl-alpha-D-glucosamine-binding residues include arginine 329 and lysine 347. The Proton acceptor role is filled by histidine 359. Positions 362 and 373 each coordinate UDP-N-acetyl-alpha-D-glucosamine. Residues alanine 376, 382-383 (NY), serine 401, and alanine 419 each bind acetyl-CoA.

The protein in the N-terminal section; belongs to the N-acetylglucosamine-1-phosphate uridyltransferase family. This sequence in the C-terminal section; belongs to the transferase hexapeptide repeat family. As to quaternary structure, homotrimer. Mg(2+) serves as cofactor.

The protein resides in the cytoplasm. The catalysed reaction is alpha-D-glucosamine 1-phosphate + acetyl-CoA = N-acetyl-alpha-D-glucosamine 1-phosphate + CoA + H(+). It carries out the reaction N-acetyl-alpha-D-glucosamine 1-phosphate + UTP + H(+) = UDP-N-acetyl-alpha-D-glucosamine + diphosphate. It functions in the pathway nucleotide-sugar biosynthesis; UDP-N-acetyl-alpha-D-glucosamine biosynthesis; N-acetyl-alpha-D-glucosamine 1-phosphate from alpha-D-glucosamine 6-phosphate (route II): step 2/2. Its pathway is nucleotide-sugar biosynthesis; UDP-N-acetyl-alpha-D-glucosamine biosynthesis; UDP-N-acetyl-alpha-D-glucosamine from N-acetyl-alpha-D-glucosamine 1-phosphate: step 1/1. The protein operates within bacterial outer membrane biogenesis; LPS lipid A biosynthesis. Its function is as follows. Catalyzes the last two sequential reactions in the de novo biosynthetic pathway for UDP-N-acetylglucosamine (UDP-GlcNAc). The C-terminal domain catalyzes the transfer of acetyl group from acetyl coenzyme A to glucosamine-1-phosphate (GlcN-1-P) to produce N-acetylglucosamine-1-phosphate (GlcNAc-1-P), which is converted into UDP-GlcNAc by the transfer of uridine 5-monophosphate (from uridine 5-triphosphate), a reaction catalyzed by the N-terminal domain. This Burkholderia ambifaria (strain MC40-6) protein is Bifunctional protein GlmU.